The sequence spans 42 residues: Cytochrome b559 subunit beta (42 aa).

Residues 17 to 33 (WLSIHALAVPTVFFLGA) form a helical membrane-spanning segment. A heme-binding site is contributed by histidine 21.

The protein belongs to the PsbE/PsbF family. Heterodimer of an alpha subunit and a beta subunit. PSII is composed of 1 copy each of membrane proteins PsbA, PsbB, PsbC, PsbD, PsbE, PsbF, PsbH, PsbI, PsbJ, PsbK, PsbL, PsbM, PsbT, PsbX, PsbY, PsbZ, Psb30/Ycf12, at least 3 peripheral proteins of the oxygen-evolving complex and a large number of cofactors. It forms dimeric complexes. Requires heme b as cofactor.

The protein resides in the plastid. It is found in the chloroplast thylakoid membrane. Its function is as follows. This b-type cytochrome is tightly associated with the reaction center of photosystem II (PSII). PSII is a light-driven water:plastoquinone oxidoreductase that uses light energy to abstract electrons from H(2)O, generating O(2) and a proton gradient subsequently used for ATP formation. It consists of a core antenna complex that captures photons, and an electron transfer chain that converts photonic excitation into a charge separation. The sequence is that of Cytochrome b559 subunit beta from Tupiella akineta (Green alga).